The sequence spans 216 residues: Pyridoxine/pyridoxamine 5'-phosphate oxidase (216 aa).

Substrate is bound by residues 12–15 (RREY) and Lys70. FMN is bound by residues 65–70 (RVVLLK), 80–81 (YT), Arg86, Lys87, and Gln109. The substrate site is built by Tyr127 and Arg131. Residues 144 to 145 (QS) and Trp189 contribute to the FMN site. 195-197 (RLH) contacts substrate. Arg199 lines the FMN pocket.

Belongs to the pyridoxamine 5'-phosphate oxidase family. As to quaternary structure, homodimer. FMN is required as a cofactor.

The catalysed reaction is pyridoxamine 5'-phosphate + O2 + H2O = pyridoxal 5'-phosphate + H2O2 + NH4(+). It carries out the reaction pyridoxine 5'-phosphate + O2 = pyridoxal 5'-phosphate + H2O2. Its pathway is cofactor metabolism; pyridoxal 5'-phosphate salvage; pyridoxal 5'-phosphate from pyridoxamine 5'-phosphate: step 1/1. It participates in cofactor metabolism; pyridoxal 5'-phosphate salvage; pyridoxal 5'-phosphate from pyridoxine 5'-phosphate: step 1/1. Catalyzes the oxidation of either pyridoxine 5'-phosphate (PNP) or pyridoxamine 5'-phosphate (PMP) into pyridoxal 5'-phosphate (PLP). The sequence is that of Pyridoxine/pyridoxamine 5'-phosphate oxidase from Blochmanniella pennsylvanica (strain BPEN).